The following is a 103-amino-acid chain: Large ribosomal subunit protein uL24 (103 aa).

Belongs to the universal ribosomal protein uL24 family. In terms of assembly, part of the 50S ribosomal subunit.

In terms of biological role, one of two assembly initiator proteins, it binds directly to the 5'-end of the 23S rRNA, where it nucleates assembly of the 50S subunit. Functionally, one of the proteins that surrounds the polypeptide exit tunnel on the outside of the subunit. In Lacticaseibacillus casei (strain BL23) (Lactobacillus casei), this protein is Large ribosomal subunit protein uL24.